A 131-amino-acid chain; its full sequence is MADVVVGKDKGGEQRLISLPLSRIRVIMKSSPEVSSINQEALVLTAKATELFVQCLATYSYRHGSGKEKKVLTYSDLANTAQQSETFQFLADILPKKILASKYLKMLKEEKREEDEENDNDNESDHDEADS.

Position 2 is an N-acetylalanine (alanine 2). Residues 100–124 are a coiled coil; the sequence is ASKYLKMLKEEKREEDEENDNDNES. Lysine 102 carries the N6-acetyllysine modification. The segment at 109-131 is disordered; sequence EEKREEDEENDNDNESDHDEADS. Acidic residues predominate over residues 112–131; it reads REEDEENDNDNESDHDEADS. A Phosphoserine modification is found at serine 124.

As to quaternary structure, heterodimer with POLE3; binds to DNA. Component of the CHRAC ISWI chromatin remodeling complex at least composed of SMARCA5/SNF2H, BAZ1A/ACF1, CHRAC1 and POLE3; the complex preferentially binds DNA through the CHRAC1-POLE3 heterodimer and possesses ATP-dependent nucleosome-remodeling activity. Within the complex, the heterodimer with POLE3 interacts with SMARCA5/SNF2H; the interaction is direct and enhances nucleosome sliding activity by the SMARCA5/SNF2H and BAZ1A/ACF1 interaction. Within the complex, the heterodimer with POLE3 interacts with BAZ1A/ACF1; the interactions are direct. In terms of tissue distribution, expressed in heart, brain, placenta, lung, liver, skeletal muscle, kidney and pancreas.

It localises to the nucleus. In terms of biological role, forms a complex with DNA polymerase epsilon subunit POLE3 and binds naked DNA, which is then incorporated into chromatin, aided by the nucleosome remodeling activity of ISWI/SNF2H and ACF1. Does not enhance nucleosome sliding activity of the ACF-5 ISWI chromatin remodeling complex. This chain is Chromatin accessibility complex protein 1 (CHRAC1), found in Homo sapiens (Human).